Here is a 473-residue protein sequence, read N- to C-terminus: Glutamate--tRNA ligase 2 (473 aa).

The 'HIGH' region signature appears at 11–21; sequence PSPTGYLHIGG. Residues 113 to 133 are compositionally biased toward basic and acidic residues; the sequence is KARAEGRPPRYDGRWRDRDPS. The disordered stretch occupies residues 113–136; that stretch reads KARAEGRPPRYDGRWRDRDPSEAP. The short motif at 240-244 is the 'KMSKS' region element; sequence KLSKR. Lys243 contacts ATP.

This sequence belongs to the class-I aminoacyl-tRNA synthetase family. Glutamate--tRNA ligase type 1 subfamily. In terms of assembly, monomer.

It localises to the cytoplasm. It carries out the reaction tRNA(Glu) + L-glutamate + ATP = L-glutamyl-tRNA(Glu) + AMP + diphosphate. Functionally, catalyzes the attachment of glutamate to tRNA(Glu) in a two-step reaction: glutamate is first activated by ATP to form Glu-AMP and then transferred to the acceptor end of tRNA(Glu). This Brucella canis (strain ATCC 23365 / NCTC 10854 / RM-666) protein is Glutamate--tRNA ligase 2.